The primary structure comprises 134 residues: Ribosome-binding factor A (134 aa).

Belongs to the RbfA family. Monomer. Binds 30S ribosomal subunits, but not 50S ribosomal subunits or 70S ribosomes.

It localises to the cytoplasm. Its function is as follows. One of several proteins that assist in the late maturation steps of the functional core of the 30S ribosomal subunit. Associates with free 30S ribosomal subunits (but not with 30S subunits that are part of 70S ribosomes or polysomes). Required for efficient processing of 16S rRNA. May interact with the 5'-terminal helix region of 16S rRNA. This Bdellovibrio bacteriovorus (strain ATCC 15356 / DSM 50701 / NCIMB 9529 / HD100) protein is Ribosome-binding factor A.